Here is a 508-residue protein sequence, read N- to C-terminus: Putative inorganic phosphate transporter 1-13 (508 aa).

Over 1-22 the chain is Cytoplasmic; that stretch reads MAGNQQLRVLHALDIARTQLYH. Residues 23–43 traverse the membrane as a helical segment; that stretch reads FIAIVIAGMGFFTDAYDLFSI. The Extracellular segment spans residues 44 to 64; that stretch reads SLVADLLGHVYYHGELPRNIH. The chain crosses the membrane as a helical span at residues 65–85; the sequence is AAVTGIALCGTVPGQLVFGWL. Residues 86–93 are Cytoplasmic-facing; sequence GDKMGRKR. The chain crosses the membrane as a helical span at residues 94-114; that stretch reads VYGITLLLMVVSSLASGLSFS. The Extracellular segment spans residues 115-117; that stretch reads KHE. Residues 118–138 form a helical membrane-spanning segment; it reads GMNIIAVLCFFRFWLGVSIGG. Topologically, residues 139–159 are cytoplasmic; the sequence is DYPLSATIMSEYANKRTRGAF. The chain crosses the membrane as a helical span at residues 160 to 180; the sequence is IAAVFAMQGFGNLAAGIIGMI. Residues 181 to 192 are Extracellular-facing; sequence VSAAFKHSSASK. A helical transmembrane segment spans residues 193–213; the sequence is IDYAWRIILMFGAIPAALTYH. Residues 214 to 277 are Cytoplasmic-facing; the sequence is WRMKMPETAR…FEFLHRHGLH (64 aa). A helical transmembrane segment spans residues 278–298; sequence LLGTTVCWFVLDVTFYSLNIF. Residues 299–328 are Extracellular-facing; it reads MKNIFTEVGLLPRLDSEYHHTLQRMITMTA. A helical membrane pass occupies residues 329-349; the sequence is VHTFISLCGALPGYFFTVAFV. Residues 350-354 lie on the Cytoplasmic side of the membrane; sequence DRIGR. Residues 355-375 form a helical membrane-spanning segment; the sequence is VKIQLIGFTMMTVFMLCLAIP. At 376–389 the chain is on the extracellular side; it reads YDQWLRHKNKYGFA. Residues 390–410 traverse the membrane as a helical segment; it reads VMYGLTFFFANFGPNTTTFII. At 411-424 the chain is on the cytoplasmic side; the sequence is PAEIFPARLRSTCH. Residues 425 to 445 traverse the membrane as a helical segment; that stretch reads GISGAVGKIGAIVGVFGFLYT. Residues 446 to 450 are Extracellular-facing; that stretch reads EYHIR. A helical transmembrane segment spans residues 451–471; the sequence is IFLFVLIGCNLVGFIFTLLLP. At 472 to 508 the chain is on the cytoplasmic side; sequence ESKGKSLEDLTGEIEEFQEEDEGSEVALSRPIHTVPL.

It belongs to the major facilitator superfamily. Phosphate:H(+) symporter (TC 2.A.1.9) family.

The protein resides in the membrane. Functionally, high-affinity transporter for external inorganic phosphate. This chain is Putative inorganic phosphate transporter 1-13 (PHT1-13), found in Oryza sativa subsp. japonica (Rice).